Consider the following 1061-residue polypeptide: Ribonuclease E (1061 aa).

Positions 39–119 (ANIYKGKITR…GNKGAALTTF (81 aa)) constitute an S1 motif domain. The segment at 57–112 (FVDYGAERHGFLPLKEIAREYFPANYSAHGRPNIKDVLREGQEVIVQIDKEERGNK) is interaction with RNA. Residues 169 to 170 (RT) are interaction with RNA 5'-terminal monophosphate. Residues D303 and D346 each contribute to the Mg(2+) site. Zn(2+) contacts are provided by C404 and C407. Residues 404–407 (CPRC) form a required for zinc-mediated homotetramerization and catalytic activity region. Disordered stretches follow at residues 532 to 565 (FAMP…PAAP), 586 to 731 (EETK…KVRY), and 752 to 822 (EPIV…RYPT). The span at 536–546 (DVPPAPTPAEP) shows a compositional bias: pro residues. A compositionally biased stretch (low complexity) spans 547 to 565 (AAPVVAPAPKAAPATPAAP). Basic and acidic residues-rich tracts occupy residues 598-608 (AEAKPERQQDR), 615-640 (NRRD…EENR), and 652-690 (ETRE…KRQA). Positions 796–814 (RRSRRSPRHLRVSGQRRRR) are enriched in basic residues. Residues 833–850 (ASPELASGKVWIRYPIVR) are interaction with enolase. Positions 1021–1061 (EAPRHSDWQRPTFAFEGKGAAGGHTATHHASAAPARPQPVE) are interaction with PNPase. The segment at 1031–1061 (PTFAFEGKGAAGGHTATHHASAAPARPQPVE) is disordered. Over residues 1043–1055 (GHTATHHASAAPA) the composition is skewed to low complexity.

Belongs to the RNase E/G family. RNase E subfamily. In terms of assembly, component of the RNA degradosome, which is a multiprotein complex involved in RNA processing and mRNA degradation. Within the RNA degradosome, RNase E assembles into a homotetramer formed by a dimer of dimers. Tetramerization is essential for catalytic activity, but not for RNA-binding. Interacts with RhlB, PNPase (pnp) and enolase (eno). Interacts with DeaD at reduced temperature. Zn(2+) serves as cofactor. Mg(2+) is required as a cofactor.

It is found in the cytoplasm. The protein localises to the cell inner membrane. It catalyses the reaction Endonucleolytic cleavage of single-stranded RNA in A- and U-rich regions.. The presence of a 5'-monophosphate on substrate RNA accelerates its cleavage by catalytically activating the enzyme. Binding to the membrane stabilizes protein structure and increases affinity for the substrate. Endoribonuclease that plays a central role in RNA processing and decay. Required for the maturation of 5S and 16S rRNAs and the majority of tRNAs. Also involved in the degradation of most mRNAs. Can also process other RNA species, such as RNAI, a molecule that controls the replication of ColE1 plasmid, and the cell division inhibitor DicF-RNA. It initiates the decay of RNAs by cutting them internally near their 5'-end. It is able to remove poly(A) tails by an endonucleolytic process. Required to initiate rRNA degradation during both starvation and quality control; acts after RNase PH (rph) exonucleolytically digests the 3'-end of the 16S rRNA. Degradation of 16S rRNA leads to 23S rRNA degradation. Processes the 3 tRNA(Pro) precursors immediately after the 3'-CCA to generate the mature ends. Its function is as follows. Prefers 5'-monophosphorylated substrates over 5'-triphosphorylated substrates. 5'-monophosphate-assisted cleavage requires at least 2 and preferably 3 or more unpaired 5'-terminal nucleotides. The optimal spacing between the 5' end and the scissile phosphate appears to be 8 nucleotides. Any sequence of unpaired nucleotides at the 5'-end is tolerated. This is Ribonuclease E from Escherichia coli (strain K12).